Consider the following 164-residue polypeptide: SsrA-binding protein (164 aa).

Residues His-143–Arg-164 form a disordered region. Over residues Lys-145–Ile-158 the composition is skewed to basic and acidic residues.

The protein belongs to the SmpB family.

The protein resides in the cytoplasm. Required for rescue of stalled ribosomes mediated by trans-translation. Binds to transfer-messenger RNA (tmRNA), required for stable association of tmRNA with ribosomes. tmRNA and SmpB together mimic tRNA shape, replacing the anticodon stem-loop with SmpB. tmRNA is encoded by the ssrA gene; the 2 termini fold to resemble tRNA(Ala) and it encodes a 'tag peptide', a short internal open reading frame. During trans-translation Ala-aminoacylated tmRNA acts like a tRNA, entering the A-site of stalled ribosomes, displacing the stalled mRNA. The ribosome then switches to translate the ORF on the tmRNA; the nascent peptide is terminated with the 'tag peptide' encoded by the tmRNA and targeted for degradation. The ribosome is freed to recommence translation, which seems to be the essential function of trans-translation. This is SsrA-binding protein from Prochlorococcus marinus (strain MIT 9312).